The sequence spans 59 residues: Dimethylamine corrinoid protein (59 aa).

A B12-binding domain is found at 1-59 (TLQGQKDVIELLKEEGLRDKIKVMVGGAPATQAWADKIGADCYAENASEAVAKAKELLA).

It belongs to the methylamine corrinoid protein family.

It functions in the pathway one-carbon metabolism; methanogenesis from dimethylamine. In terms of biological role, acts as a methyl group carrier between MtbB and MtbA. In Methanosarcina thermophila, this protein is Dimethylamine corrinoid protein (mtbC).